A 611-amino-acid polypeptide reads, in one-letter code: Adenosylhomocysteinase 3 (611 aa).

3 stretches are compositionally biased toward low complexity: residues Met-1 to Val-14, Ala-40 to Ala-57, and Gly-68 to Gly-78. A disordered region spans residues Met-1–Ser-184. Ser-2 bears the N-acetylserine mark. Positions Ser-2 to Asp-109 are LISN domain, inhibits interaction with ITPR1. The residue at position 107 (Ser-107) is a Phosphoserine. Positions Arg-135–Leu-144 are enriched in basic residues. Low complexity predominate over residues Ser-145–Asp-164. 4 positions are modified to phosphoserine: Ser-149, Ser-152, Ser-155, and Ser-158. The substrate site is built by Thr-236, Asp-310, and Glu-335. Ser-336–Thr-338 contacts NAD(+). Substrate contacts are provided by Lys-365 and Asp-369. NAD(+)-binding positions include Asn-370, Gly-401–Gly-406, Glu-422, Asn-457, Met-478–Gly-479, and Asn-525.

Belongs to the adenosylhomocysteinase family. Homotetramer. Forms heteromultimers with AHCYL1 (via the C-terminal region). Interacts with ITPR1; with lower affinity than AHCYL1 and maybe via ITPR1. Interacts with SLC4A4. Interacts with ZCCHC4. NAD(+) serves as cofactor. Post-translationally, phosphorylated during neuronal differentiation at the LISN domain. As to expression, expressed in parotid and acinar cells (at protein level).

The protein resides in the cytoplasm. It localises to the microsome. It catalyses the reaction S-adenosyl-L-homocysteine + H2O = L-homocysteine + adenosine. It functions in the pathway amino-acid biosynthesis; L-homocysteine biosynthesis; L-homocysteine from S-adenosyl-L-homocysteine: step 1/1. Functionally, may regulate the electrogenic sodium/bicarbonate cotransporter SLC4A4 activity and Mg(2+)-sensitivity. On the contrary of its homolog AHCYL1, does not regulate ITPR1 sensitivity to inositol 1,4,5-trisphosphate. The chain is Adenosylhomocysteinase 3 from Bos taurus (Bovine).